A 947-amino-acid polypeptide reads, in one-letter code: Serine-aspartate repeat-containing protein C (947 aa).

A signal peptide spans 1-50; it reads MNNKKTATNRKGMIPNRLNKFSIRKYSVGTASILVGTTLIFGLSGHEAKA. Residues 51-164 form a disordered region; that stretch reads AEHTNGELNQ…STTPKTTTIK (114 aa). A ligand binding A region region spans residues 51 to 495; the sequence is AEHTNGELNQ…GSSTANGDQK (445 aa). The span at 56 to 71 shows a compositional bias: polar residues; that stretch reads GELNQSKNETTAPSEN. Residues 72-83 show a composition bias toward basic and acidic residues; sequence KTTKKVDSRQLK. Residues 84–155 show a composition bias toward polar residues; that stretch reads DNTQTATADQ…SNLTQAKDVS (72 aa). CNA-B domains lie at 496-606 and 607-717; these read KYNL…YKTP and KYSL…EEET. The disordered stretch occupies residues 678–927; the sequence is TQTGTNTTED…NNSNNGTLFG (250 aa). 2 stretches are compositionally biased toward acidic residues: residues 685–695 and 712–886; these read TEDDKDADGGE and YYEE…DSDS. The short motif at 910-914 is the LPXTG sorting signal element; that stretch reads LPETG. A compositionally biased stretch (low complexity) spans 912–927; it reads ETGSENNNSNNGTLFG. Pentaglycyl murein peptidoglycan amidated threonine is present on T913. Residues 914–947 constitute a propeptide, removed by sortase; sequence GSENNNSNNGTLFGGLFAALGSLLLFGRRKKQNK.

It belongs to the serine-aspartate repeat-containing protein (SDr) family. Homodimerizes; via N2-Domain. Interacts with host NRXN1; this interaction mediates bacterial attachment to host cells.

The protein resides in the secreted. It localises to the cell wall. Functionally, cell surface-associated calcium-binding protein which plays an important role in adhesion and pathogenesis. Mediates interactions with components of the extracellular matrix such as host NRXN1 to promote bacterial adhesion. The polypeptide is Serine-aspartate repeat-containing protein C (sdrC) (Staphylococcus aureus (strain COL)).